Here is a 374-residue protein sequence, read N- to C-terminus: Probable trehalose-phosphate phosphatase 9 (374 aa).

This sequence belongs to the trehalose phosphatase family. A divalent metal cation is required as a cofactor.

It catalyses the reaction alpha,alpha-trehalose 6-phosphate + H2O = alpha,alpha-trehalose + phosphate. It functions in the pathway glycan biosynthesis; trehalose biosynthesis. Its function is as follows. Removes the phosphate from trehalose 6-phosphate to produce free trehalose. Trehalose accumulation in plant may improve abiotic stress tolerance. This is Probable trehalose-phosphate phosphatase 9 (TPP9) from Oryza sativa subsp. japonica (Rice).